A 714-amino-acid chain; its full sequence is Probable serine/threonine-protein kinase mkcB (714 aa).

Over residues 1–12 (MKSILKKAKHFF) the composition is skewed to basic residues. Disordered stretches follow at residues 1–267 (MKSI…SSTS) and 281–349 (GSGS…EQKP). Residues 23–35 (GGEKTAKESESQQ) are compositionally biased toward basic and acidic residues. A compositionally biased stretch (low complexity) spans 62-83 (SQSQPTTSALQTSTSLQPSSSL). Polar residues predominate over residues 84–94 (HQIPQSQSSLE). Composition is skewed to low complexity over residues 95–111 (LTTN…TKQL) and 120–166 (PHSQ…TLTT). The span at 167–177 (PVPSSENLATL) shows a compositional bias: polar residues. 2 stretches are compositionally biased toward low complexity: residues 178–241 (STST…QEQT) and 254–267 (LSQS…SSTS). The span at 282-294 (SGSTKNKDSSSAP) shows a compositional bias: polar residues. Composition is skewed to low complexity over residues 300 to 314 (NNNN…KNRS) and 324 to 337 (NNNN…KNNN). The region spanning 438–687 (YKDSDQVGKG…AEELLKHPFI (250 aa)) is the Protein kinase domain. Residues 444-452 (VGKGGFGTV) and Lys467 contribute to the ATP site. Asp558 (proton acceptor) is an active-site residue.

Belongs to the protein kinase superfamily. STE Ser/Thr protein kinase family. STE20 subfamily. Mg(2+) serves as cofactor. Expressed at equal levels in prestalk and prespore cells.

It carries out the reaction L-seryl-[protein] + ATP = O-phospho-L-seryl-[protein] + ADP + H(+). The catalysed reaction is L-threonyl-[protein] + ATP = O-phospho-L-threonyl-[protein] + ADP + H(+). The chain is Probable serine/threonine-protein kinase mkcB from Dictyostelium discoideum (Social amoeba).